A 146-amino-acid chain; its full sequence is Nucleoside diphosphate kinase (146 aa).

ATP-binding residues include K11, F59, R87, T93, R104, and N114. H117 functions as the Pros-phosphohistidine intermediate in the catalytic mechanism.

It belongs to the NDK family. As to quaternary structure, homotetramer. It depends on Mg(2+) as a cofactor.

Its subcellular location is the cytoplasm. It catalyses the reaction a 2'-deoxyribonucleoside 5'-diphosphate + ATP = a 2'-deoxyribonucleoside 5'-triphosphate + ADP. The catalysed reaction is a ribonucleoside 5'-diphosphate + ATP = a ribonucleoside 5'-triphosphate + ADP. Its function is as follows. Major role in the synthesis of nucleoside triphosphates other than ATP. The ATP gamma phosphate is transferred to the NDP beta phosphate via a ping-pong mechanism, using a phosphorylated active-site intermediate. This is Nucleoside diphosphate kinase from Anaplasma marginale (strain Florida).